We begin with the raw amino-acid sequence, 516 residues long: Glycerol-3-phosphate dehydrogenase 1 (516 aa).

Residue 28-56 participates in FAD binding; the sequence is DVIVIGGGITGVGIALDAATRGLTVALVE.

Belongs to the FAD-dependent glycerol-3-phosphate dehydrogenase family. The cofactor is FAD.

It localises to the cytoplasm. The enzyme catalyses a quinone + sn-glycerol 3-phosphate = dihydroxyacetone phosphate + a quinol. The chain is Glycerol-3-phosphate dehydrogenase 1 (glpD1) from Mycobacterium bovis (strain ATCC BAA-935 / AF2122/97).